Reading from the N-terminus, the 84-residue chain is Insulin-like peptide 05 (84 aa).

Positions 1 to 22 are cleaved as a signal peptide; it reads MKTPILFVVVVAVLIVTDSAEG. Residues 23-37 constitute a propeptide that is removed on maturation; that stretch reads FKGKANSFLKPLQRR. Disulfide bonds link Cys-43/Cys-48, Cys-44/Cys-73, and Cys-57/Cys-61.

This sequence belongs to the insulin family.

The protein localises to the secreted. Its function is as follows. Insulin decreases blood glucose concentration. May have evolved to activate insulin receptors (INSR) in vertebrates. Molecular docking studies reveals unique interaction with the human insulin receptor. In vivo, insulin-like peptide injection reduces blood glucose levels in two models of zebrafish diabetes (streptozotocin- and glucose-induced). Also shorter swimming distance of zebrafish larvae, an effect which is not observed with human insulin. The polypeptide is Insulin-like peptide 05 (Exaiptasia diaphana (Tropical sea anemone)).